We begin with the raw amino-acid sequence, 270 residues long: Chymotrypsin-like elastase family member 3A (270 aa).

Positions 1-15 (MMLRLLSSLLLVAVA) form a signal peptide, or 16. A propeptide spans 16-28 (SGYGPPSSHSSSR) (activation peptide). A Peptidase S1 domain is found at 29–268 (VVHGEDAVPY…FIDWIEETIA (240 aa)). A disulfide bond links Cys-58 and Cys-74. Catalysis depends on His-73, which acts as the Charge relay system. N-linked (GlcNAc...) asparagine glycosylation is present at Asn-114. A disulfide bridge links Cys-117 with Cys-120. The active-site Charge relay system is Asp-123. Disulfide bonds link Cys-157–Cys-223, Cys-188–Cys-204, and Cys-213–Cys-244. Ser-217 functions as the Charge relay system in the catalytic mechanism.

It belongs to the peptidase S1 family. Elastase subfamily.

It catalyses the reaction Preferential cleavage: Ala-|-Xaa. Does not hydrolyze elastin.. Functionally, efficient protease with alanine specificity but only little elastolytic activity. In Homo sapiens (Human), this protein is Chymotrypsin-like elastase family member 3A (CELA3A).